The primary structure comprises 141 residues: Large ribosomal subunit protein uL11 (141 aa).

The protein belongs to the universal ribosomal protein uL11 family. Part of the ribosomal stalk of the 50S ribosomal subunit. Interacts with L10 and the large rRNA to form the base of the stalk. L10 forms an elongated spine to which L12 dimers bind in a sequential fashion forming a multimeric L10(L12)X complex. Post-translationally, one or more lysine residues are methylated.

Functionally, forms part of the ribosomal stalk which helps the ribosome interact with GTP-bound translation factors. This chain is Large ribosomal subunit protein uL11, found in Synechococcus sp. (strain CC9902).